The following is a 257-amino-acid chain: uncharacterized protein (257 aa).

NAD(+) is bound by residues D34, D60, V61, N87, Y152, and K156. The Proton acceptor role is filled by Y152.

The protein belongs to the short-chain dehydrogenases/reductases (SDR) family.

This is an uncharacterized protein from Bacillus subtilis (strain 168).